Consider the following 154-residue polypeptide: Aspartate 1-decarboxylase 1 (154 aa).

The Schiff-base intermediate with substrate; via pyruvic acid role is filled by Ser26. A Pyruvic acid (Ser) modification is found at Ser26. A substrate-binding site is contributed by Thr58. Catalysis depends on Tyr59, which acts as the Proton donor. 74-76 provides a ligand contact to substrate; the sequence is GAA. Positions 129–154 are disordered; it reads VGLVRGDTNSPQPSLSEQAGDPRRAQ. Positions 135 to 145 are enriched in polar residues; that stretch reads DTNSPQPSLSE.

Belongs to the PanD family. In terms of assembly, heterooctamer of four alpha and four beta subunits. Pyruvate serves as cofactor. Is synthesized initially as an inactive proenzyme, which is activated by self-cleavage at a specific serine bond to produce a beta-subunit with a hydroxyl group at its C-terminus and an alpha-subunit with a pyruvoyl group at its N-terminus.

It localises to the cytoplasm. It catalyses the reaction L-aspartate + H(+) = beta-alanine + CO2. It participates in cofactor biosynthesis; (R)-pantothenate biosynthesis; beta-alanine from L-aspartate: step 1/1. Functionally, catalyzes the pyruvoyl-dependent decarboxylation of aspartate to produce beta-alanine. This Frankia casuarinae (strain DSM 45818 / CECT 9043 / HFP020203 / CcI3) protein is Aspartate 1-decarboxylase 1.